Reading from the N-terminus, the 82-residue chain is UPF0180 protein BC_1394 (82 aa).

This sequence belongs to the UPF0180 family.

This is UPF0180 protein BC_1394 from Bacillus cereus (strain ATCC 14579 / DSM 31 / CCUG 7414 / JCM 2152 / NBRC 15305 / NCIMB 9373 / NCTC 2599 / NRRL B-3711).